Consider the following 386-residue polypeptide: Cysteine protease Amb a 11.0101 (386 aa).

The signal sequence occupies residues 1–22 (MEINKLVCFSFSLVLILGLVES). The T-cell epitope. MHC class II peptide able to activate CD(4+) T cells of the ragweed pollen-allergic patients indicated by significantly increased IL-2 production compared to non-allergic individuals. Not recognized by IgE of the patients allergic to ragweed pollen stretch occupies residues 6 to 20 (LVCFSFSLVLILGLV). Residues 23–108 (FHYHERELES…SKISHFQALR (86 aa)) constitute a propeptide, activation peptide. N127 carries an N-linked (GlcNAc...) (complex) asparagine glycan. 3 cysteine pairs are disulfide-bonded: C152–C193, C186–C226, and C283–C334. C155 is an active-site residue. The segment at 173–186 (GKLVKFSEQQLVDC) is B-cell epitope. Binds to IgE of the patients allergic to ragweed pollen. Residues H289 and N310 contribute to the active site. A disordered region spans residues 340 to 377 (SSFPIMNDPNPPKDDPNGPKDDPDAPKDPKFKTTQRLQ). Residues 350–370 (PPKDDPNGPKDDPDAPKDPKF) are compositionally biased toward basic and acidic residues. Residues 371 to 386 (KTTQRLQGIRTKLLEL) constitute a propeptide, removed in mature form.

The protein belongs to the peptidase C1 family. Homodimer. In terms of processing, autocatalytic proteolytic cleavage of N-terminal activation peptide. Post-translationally, N-glycosylated. Glycosylation is not required for binding to IgE. In terms of tissue distribution, expressed in pollen (at protein and mRNA level).

With respect to regulation, activated by L-cysteine. Inhibited by cysteine protease inhibitor E64 (L-trans-epoxysuccinyl-leucylamide-(4-guanido)-butane). Inhibited by cysteine/serine protease inhibitor leupeptin. Not inhibited by serine protease inhibitors 4-(2-aminoethyl)benzenesulfonyl fluoride hydrochloride (AEBSF) and phenylmethanesulfonyl fluoride (PMSF), metallo protease inhibitor bestatin or aspartic protease inhibitor pepstatin A. In terms of biological role, cysteine protease. Hydrolyzes casein and synthetic peptide Boc-Val-Leu-Lys-7-amino-4-methylcoumarin (Boc-VLK-AMC) in vitro. The chain is Cysteine protease Amb a 11.0101 from Ambrosia artemisiifolia (Common ragweed).